The sequence spans 240 residues: Mediator of RNA polymerase II transcription subunit 19-B (240 aa).

The segment covering 1–14 has biased composition (polar residues); sequence MTEIFSSLYGQPDS. 2 disordered regions span residues 1 to 29 and 168 to 240; these read MTEIFSSLYGQPDSQGPAGPSALGFGSGK and PKKK…SSLR. Basic residues-rich tracts occupy residues 168-180 and 209-221; these read PKKKNKHKHKHHR and KKKKKDKKKKKNR.

This sequence belongs to the Mediator complex subunit 19 family. In terms of assembly, component of the Mediator complex.

It localises to the nucleus. Component of the Mediator complex, a coactivator involved in the regulated transcription of nearly all RNA polymerase II-dependent genes. Mediator functions as a bridge to convey information from gene-specific regulatory proteins to the basal RNA polymerase II transcription machinery. Mediator is recruited to promoters by direct interactions with regulatory proteins and serves as a scaffold for the assembly of a functional preinitiation complex with RNA polymerase II and the general transcription factors. The chain is Mediator of RNA polymerase II transcription subunit 19-B (med19b) from Danio rerio (Zebrafish).